Here is an 895-residue protein sequence, read N- to C-terminus: Androgen receptor (895 aa).

A modulating region spans residues 1 to 533; that stretch reads MEVQLGLGRV…PIDYYFPPQK (533 aa). The interaction with ZNF318 stretch occupies residues 1 to 562; it reads MEVQLGLGRV…GSCKVFFKRA (562 aa). Disordered regions lie at residues 33-155 and 175-211; these read VIQN…PTFP and QLLQ…YLGG. Low complexity-rich tracts occupy residues 44–81 and 175–200; these read AASA…GSPQ and QLLQ…ASGA. S66 carries the phosphoserine; by CDK9 modification. S79 carries the phosphoserine modification. A compositionally biased stretch (polar residues) spans 201–211; that stretch reads PTSSKDNYLGG. The residue at position 208 (Y208) is a Phosphotyrosine; by CSK. A Phosphoserine modification is found at S241. Y252 is subject to Phosphotyrosine; by CSK and TNK2. 4 positions are modified to phosphotyrosine; by CSK: Y292, Y331, Y342, and Y347. A Phosphotyrosine; by CSK and TNK2 modification is found at Y348. Residue K371 forms a Glycyl lysine isopeptide (Lys-Gly) (interchain with G-Cter in SUMO) linkage. At Y378 the chain carries Phosphotyrosine; by CSK. K496 participates in a covalent cross-link: Glycyl lysine isopeptide (Lys-Gly) (interchain with G-Cter in SUMO). Residues Y510 and Y527 each carry the phosphotyrosine; by CSK modification. The segment at 527-894 is interaction with LPXN; it reads YYFPPQKTCL…GKVKPIYFHT (368 aa). The segment at residues 534–607 is a DNA-binding region (nuclear receptor); the sequence is TCLICGDEAS…AGMTLGARKL (74 aa). 2 consecutive NR C4-type zinc fingers follow at residues 535–555 and 571–595; these read CLIC…CGSC and CASR…LRKC. The tract at residues 547–637 is interaction with HIPK3; that stretch reads YGALTCGSCK…TEETAQKLTV (91 aa). The tract at residues 567–894 is interaction with CCAR1; the sequence is QKYLCASRND…GKVKPIYFHT (328 aa). An interaction with KAT7 region spans residues 600-894; the sequence is MTLGARKLKK…GKVKPIYFHT (295 aa). Position 626 is a phosphoserine; by STK4/MST1 (S626). The NR LBD domain maps to 644-875; the sequence is ECQPIFLNVL…DFPEMMAEII (232 aa). 2 residues coordinate 17beta-hydroxy-5alpha-androstan-3-one: N681 and R728. Residues K821 and K823 each participate in a glycyl lysine isopeptide (Lys-Gly) (interchain with G-Cter in ubiquitin) cross-link. T853 is a binding site for 17beta-hydroxy-5alpha-androstan-3-one. A Phosphotyrosine; by CSK modification is found at Y891.

Belongs to the nuclear hormone receptor family. NR3 subfamily. Binds DNA as a homodimer. Part of a ternary complex containing AR, EFCAB6/DJBP and PARK7. Interacts with HIPK3 and NR0B2 in the presence of androgen. The ligand binding domain interacts with KAT7/HBO1 in the presence of dihydrotestosterone. Interacts with EFCAB6/DJBP, PQBP1, RANBP9, RBAK, SPDEF, SRA1, TGFB1I1 and RREB1. Interacts with ZMIZ1/ZIMP10 and ZMIZ2/ZMIP7 which both enhance its transactivation activity. Interacts with SLC30A9 and RAD54L2/ARIP4. Interacts with MACROD1 (via macro domain). Interacts via the ligand-binding domain with LXXLL and FXXLF motifs from NCOA1, NCOA2, NCOA3 and MAGEA11. Interacts (via nuclear receptor DNA binding domain and nuclear receptor ligand binding domain) with NCOA4. The AR N-terminal poly-Gln region binds Ran resulting in enhancement of AR-mediated transactivation. Ran-binding decreases as the poly-Gln length increases. Interacts with HIP1 (via coiled coil domain). Interacts (via ligand-binding domain) with TRIM68. Interacts with TNK2. Interacts with USP26. Interacts with RNF6. Interacts (regulated by RNF6 probably through polyubiquitination) with RNF14; regulates AR transcriptional activity. Interacts with PRMT2 and TRIM24. Interacts with RACK1. Interacts with RANBP10; this interaction enhances dihydrotestosterone-induced AR transcriptional activity. Interacts with PRPF6 in a hormone-independent way; this interaction enhances dihydrotestosterone-induced AR transcriptional activity. Interacts with STK4/MST1. Interacts with ZIPK/DAPK3. Interacts with LPXN. Interacts with MAK. Part of a complex containing AR, MAK and NCOA3. Interacts with CRY1. Interacts with CCAR1 and GATA2. Interacts with ZNF318. Interacts with BUD31. Interacts with ARID4A. Interacts with ARID4B. Interacts (via NR LBD domain) with ZBTB7A; the interaction is direct and androgen-dependent. Interacts with NCOR1. Interacts with NCOR2. Interacts with CRY2 in a ligand-dependent manner. In terms of processing, phosphorylated in prostate cancer cells in response to several growth factors including EGF. Phosphorylation is induced by c-Src kinase (CSK). Tyr-510 is one of the major phosphorylation sites and an increase in phosphorylation and Src kinase activity is associated with prostate cancer progression. Phosphorylation by TNK2 enhances the DNA-binding and transcriptional activity. Phosphorylation at Ser-66 by CDK9 regulates AR promoter selectivity and cell growth. Post-translationally, sumoylated on Lys-371 (major) and Lys-496. Ubiquitinated. Deubiquitinated by USP26. 'Lys-6' and 'Lys-27'-linked polyubiquitination by RNF6 modulates AR transcriptional activity and specificity. Palmitoylated by ZDHHC7 and ZDHHC21. Palmitoylation is required for plasma membrane targeting and for rapid intracellular signaling via ERK and AKT kinases and cAMP generation.

The protein resides in the nucleus. It localises to the cytoplasm. Functionally, steroid hormone receptors are ligand-activated transcription factors that regulate eukaryotic gene expression and affect cellular proliferation and differentiation in target tissues. Transcription factor activity is modulated by bound coactivator and corepressor proteins like ZBTB7A that recruits NCOR1 and NCOR2 to the androgen response elements/ARE on target genes, negatively regulating androgen receptor signaling and androgen-induced cell proliferation. Transcription activation is also down-regulated by NR0B2. Activated, but not phosphorylated, by HIPK3 and ZIPK/DAPK3. The protein is Androgen receptor (AR) of Papio hamadryas (Hamadryas baboon).